A 549-amino-acid chain; its full sequence is Dihydroxy-acid dehydratase (549 aa).

Aspartate 78 serves as a coordination point for Mg(2+). Cysteine 119 is a binding site for [2Fe-2S] cluster. Mg(2+) contacts are provided by aspartate 120 and lysine 121. Lysine 121 carries the post-translational modification N6-carboxylysine. Position 192 (cysteine 192) interacts with [2Fe-2S] cluster. A Mg(2+)-binding site is contributed by glutamate 439. Serine 465 acts as the Proton acceptor in catalysis.

This sequence belongs to the IlvD/Edd family. As to quaternary structure, homodimer. [2Fe-2S] cluster is required as a cofactor. It depends on Mg(2+) as a cofactor.

The enzyme catalyses (2R)-2,3-dihydroxy-3-methylbutanoate = 3-methyl-2-oxobutanoate + H2O. The catalysed reaction is (2R,3R)-2,3-dihydroxy-3-methylpentanoate = (S)-3-methyl-2-oxopentanoate + H2O. Its pathway is amino-acid biosynthesis; L-isoleucine biosynthesis; L-isoleucine from 2-oxobutanoate: step 3/4. It participates in amino-acid biosynthesis; L-valine biosynthesis; L-valine from pyruvate: step 3/4. In terms of biological role, functions in the biosynthesis of branched-chain amino acids. Catalyzes the dehydration of (2R,3R)-2,3-dihydroxy-3-methylpentanoate (2,3-dihydroxy-3-methylvalerate) into 2-oxo-3-methylpentanoate (2-oxo-3-methylvalerate) and of (2R)-2,3-dihydroxy-3-methylbutanoate (2,3-dihydroxyisovalerate) into 2-oxo-3-methylbutanoate (2-oxoisovalerate), the penultimate precursor to L-isoleucine and L-valine, respectively. The chain is Dihydroxy-acid dehydratase from Endomicrobium trichonymphae.